Consider the following 466-residue polypeptide: Glycine--tRNA ligase (466 aa).

Positions 105 and 168 each coordinate substrate. ATP-binding positions include 200 to 202 (RNE), 210 to 215 (FRTREF), 287 to 288 (EL), and 331 to 334 (GLTR). Substrate is bound at residue 215–219 (FEQME). 327-331 (EPAAG) contributes to the substrate binding site.

This sequence belongs to the class-II aminoacyl-tRNA synthetase family. Homodimer.

It localises to the cytoplasm. It carries out the reaction tRNA(Gly) + glycine + ATP = glycyl-tRNA(Gly) + AMP + diphosphate. In terms of biological role, catalyzes the attachment of glycine to tRNA(Gly). This is Glycine--tRNA ligase from Nocardia farcinica (strain IFM 10152).